A 130-amino-acid polypeptide reads, in one-letter code: Fluoride-specific ion channel FluC (130 aa).

4 consecutive transmembrane segments (helical) span residues 7–27 (VLAI…LGLW), 36–56 (LGTL…VAVF), 69–89 (ALIT…AEVV), and 99–119 (LGFG…LAGI). Na(+) is bound by residues Gly-76 and Thr-79.

It belongs to the fluoride channel Fluc/FEX (TC 1.A.43) family.

The protein localises to the cell inner membrane. The enzyme catalyses fluoride(in) = fluoride(out). Its activity is regulated as follows. Na(+) is not transported, but it plays an essential structural role and its presence is essential for fluoride channel function. Functionally, fluoride-specific ion channel. Important for reducing fluoride concentration in the cell, thus reducing its toxicity. This Albidiferax ferrireducens (strain ATCC BAA-621 / DSM 15236 / T118) (Rhodoferax ferrireducens) protein is Fluoride-specific ion channel FluC.